The following is a 273-amino-acid chain: Spore development regulator vosA (273 aa).

Residues 66–75 show a composition bias toward low complexity; that stretch reads STTQELQSTQ. The interval 66 to 86 is disordered; that stretch reads STTQELQSTQPIAVRQQPRAA. The Velvet domain maps to 70–253; sequence ELQSTQPIAV…KEQGCIISIK (184 aa). The short motif at 211–218 is the Nuclear localization signal element; it reads FPTLTEIK. The span at 254–267 shows a compositional bias: basic and acidic residues; sequence KGNERARPRGADGR. A disordered region spans residues 254-273; the sequence is KGNERARPRGADGRSDDEDD.

This sequence belongs to the velvet family. VosA subfamily. As to quaternary structure, forms a heterodimeric complex with velB; the formation of the velB-vosA complex is light-dependent.

Its subcellular location is the nucleus. In terms of biological role, component of the velB-vosA heterodimeric complex that plays a dual role in activating genes associated with spore maturation and repressing certain development-associated genes. The complex binds DNA through the DNA-binding domain of vosA that recognizes an 11-nucleotide consensus sequence 5'-CTGGCCGCGGC-3' consisting of two motifs in the promoters of key developmental regulatory genes. Positively regulates the expression of wetA and represses abaA and brlA. Acts as a crucial regulator of both conidiation capacity and conidial quality. Responsible for the synthesis and accumulation of intracellular trehalose. This chain is Spore development regulator vosA, found in Beauveria bassiana (strain ARSEF 2860) (White muscardine disease fungus).